A 149-amino-acid chain; its full sequence is Putative sugar phosphate isomerase YwlF (149 aa).

Histidine 9 contacts substrate. The Proton acceptor role is filled by cysteine 66. Position 67-72 (67-72) interacts with substrate; sequence GTGIGM. Histidine 99 serves as the catalytic Proton donor. Arginine 133 contacts substrate.

The protein belongs to the LacAB/RpiB family.

In Bacillus subtilis (strain 168), this protein is Putative sugar phosphate isomerase YwlF (ywlF).